The sequence spans 1479 residues: Type VII secretion system protein EssC (1479 aa).

Topologically, residues 1–229 (MHKLIIKYNK…RPPQPIQKNN (229 aa)) are cytoplasmic. Residues 230–252 (TVIWRSIIPPLVMIALTVVIFLV) traverse the membrane as a helical segment. The Extracellular portion of the chain corresponds to 253–256 (RPIG). A helical membrane pass occupies residues 257–279 (IYILMMIGMSTVTIVFGITTYFS). At 280–1479 (EKKKYNKDVE…QAYQKIRWFK (1200 aa)) the chain is on the cytoplasmic side. FtsK domains are found at residues 652-846 (DDIL…QDSN) and 997-1183 (QGPM…SEVS). ATP-binding positions include 672–679 (GTTGSGKS) and 1014–1021 (GSPGYGRT).

This sequence belongs to the EssC family. In terms of assembly, homooligomer. Interacts with EsaE.

The protein resides in the cell membrane. Functionally, component of the type VII secretion system (Ess). Required for the secretion of substrates including EsxA and EsxB. However, unable to support secretion of the substrate protein EsxC. The protein is Type VII secretion system protein EssC of Staphylococcus aureus (strain Mu50 / ATCC 700699).